Consider the following 979-residue polypeptide: Putative transcription initiation factor TFIID 111 kDa subunit (979 aa).

S244 is modified (phosphoserine).

In terms of assembly, TFIID is composed of TATA binding protein (TBP) and a number of TBP-associated factors (TAFs).

The protein localises to the nucleus. Functionally, TAFs are components of the transcription factor IID (TFIID) complex that are essential for mediating regulation of RNA polymerase transcription. The protein is Putative transcription initiation factor TFIID 111 kDa subunit of Schizosaccharomyces pombe (strain 972 / ATCC 24843) (Fission yeast).